The sequence spans 351 residues: SLAM family member 6 (351 aa).

The signal sequence occupies residues 1–30 (MAVSRAPAPDSACQRMVWLFPLVFCLGSGS). At 31–239 (EVSQSSSDPQ…KGVLTNPPWN (209 aa)) the chain is on the extracellular side. Residues 36–130 (SSDPQLMNGV…YTAQITTKDS (95 aa)) enclose the Ig-like V-type domain. 9 N-linked (GlcNAc...) asparagine glycosylation sites follow: Asn82, Asn101, Asn112, Asn152, Asn159, Asn172, Asn186, Asn193, and Asn218. The 64-residue stretch at 147–210 (NLETTNYTLL…RNSGDQTYVC (64 aa)) folds into the Ig-like C2-type domain. 2 cysteine pairs are disulfide-bonded: Cys162–Cys229 and Cys168–Cys210. A helical transmembrane segment spans residues 240 to 262 (AVWFMTTISIISAVILIFVCWSI). Topologically, residues 263 to 351 (HVWKRRGSLP…KVNTLINYNS (89 aa)) are cytoplasmic. The tract at residues 272–295 (PLTSQHPESSQSTDGPGSPGNTVY) is disordered. 2 short sequence motifs (ITSM) span residues 293 to 298 (TVYAQV) and 317 to 322 (TIYSIV). At Tyr319 the chain carries Phosphotyrosine.

In terms of assembly, homodimer. Interacts with PTN6 and, upon phosphorylation, with PTN11 and SH2D1A/SAP. In terms of processing, phosphorylated. In terms of tissue distribution, expressed on hematopoietic cells. Isoform 3 is expressed in thymocytes and B lymphocytes of C57Bl/6 strain.

The protein localises to the cell membrane. In terms of biological role, self-ligand receptor of the signaling lymphocytic activation molecule (SLAM) family. SLAM receptors triggered by homo- or heterotypic cell-cell interactions are modulating the activation and differentiation of a wide variety of immune cells and thus are involved in the regulation and interconnection of both innate and adaptive immune response. Activities are controlled by presence or absence of small cytoplasmic adapter proteins, SH2D1A/SAP and/or SH2D1B/EAT-2. Triggers cytolytic activity only in natural killer cells (NK) expressing high surface densities of natural cytotoxicity receptors. Positive signaling in NK cells implicates phosphorylation of VAV1. NK cell activation seems to depend on SH2D1B and not on SH2D1A. In conjunction with SLAMF1 controls the transition between positive selection and the subsequent expansion and differentiation of the thymocytic natural killer T (NKT) cell lineage. Promotes T cell differentiation into a helper T-cell Th17 phenotype leading to increased IL-17 secretion; the costimulatory activity requires SH2D1A. Promotes recruitment of RORC to the IL-17 promoter. In conjunction with SLAMF1 and CD84/SLAMF5 may be a negative regulator of the humoral immune response. In the absence of SH2D1A/SAP can transmit negative signals to CD4(+) T-cells and NKT cells. Negatively regulates germinal center formation by inhibiting T-cell:B-cell adhesion; the function probably implicates increased association with PTPN6/SHP-1 via ITSMs in absence of SH2D1A/SAP. However, reported to mediated T-cell adhesion, to participate in stable T-cell:B-cell interactions and to be involved in maintaining B-cell tolerance in germinal centers and in preventing autoimmunity. Involved in regulation of autoimmunity. Isoform 3 may be suppressor of pathogenic T-cell proliferation. The protein is SLAM family member 6 (Slamf6) of Mus musculus (Mouse).